We begin with the raw amino-acid sequence, 400 residues long: ATP-dependent rRNA helicase RRP3 (400 aa).

The Q motif motif lies at 1-29 (MEFGDLRIDESLIKTCQEKGITRPTEVQR). In terms of domain architecture, Helicase ATP-binding spans 32-202 (IPAVLGGGDV…SSILKRPKTI (171 aa)). Position 45-52 (45-52 (SQTGSGKT)) interacts with ATP. Positions 150-153 (DEAD) match the DEAD box motif. One can recognise a Helicase C-terminal domain in the interval 229-373 (ALVELLEMSQ…EFKMMKKNFG (145 aa)).

It belongs to the DEAD box helicase family. DDX47/RRP3 subfamily. As to quaternary structure, interacts with the SSU processome.

The protein resides in the nucleus. It carries out the reaction ATP + H2O = ADP + phosphate + H(+). Its function is as follows. ATP-dependent rRNA helicase required for pre-ribosomal RNA processing. Involved in the maturation of the 35S-pre-rRNA and to its cleavage to mature 18S rRNA. This Encephalitozoon cuniculi (strain GB-M1) (Microsporidian parasite) protein is ATP-dependent rRNA helicase RRP3.